A 464-amino-acid polypeptide reads, in one-letter code: Argininosuccinate lyase (464 aa).

The protein belongs to the lyase 1 family. Argininosuccinate lyase subfamily.

It localises to the cytoplasm. The catalysed reaction is 2-(N(omega)-L-arginino)succinate = fumarate + L-arginine. The protein operates within amino-acid biosynthesis; L-arginine biosynthesis; L-arginine from L-ornithine and carbamoyl phosphate: step 3/3. The protein is Argininosuccinate lyase of Moorella thermoacetica (strain ATCC 39073 / JCM 9320).